We begin with the raw amino-acid sequence, 131 residues long: Arsenate reductase (131 aa).

Catalysis depends on nucleophile residues Cys10, Cys82, and Cys89. Cystine bridges form between Cys10/Cys82 and Cys82/Cys89.

Belongs to the low molecular weight phosphotyrosine protein phosphatase family. Thioredoxin-coupled ArsC subfamily.

The protein localises to the cytoplasm. The enzyme catalyses arsenate + [thioredoxin]-dithiol + H(+) = arsenite + [thioredoxin]-disulfide + H2O. Functionally, catalyzes the reduction of arsenate [As(V)] to arsenite [As(III)]. This Staphylococcus xylosus protein is Arsenate reductase.